Consider the following 429-residue polypeptide: Serine--tRNA ligase (429 aa).

229–231 (TAE) lines the L-serine pocket. An ATP-binding site is contributed by 260–262 (RSE). Position 283 (E283) interacts with L-serine. 347-350 (EISS) is an ATP binding site. S383 is an L-serine binding site.

Belongs to the class-II aminoacyl-tRNA synthetase family. Type-1 seryl-tRNA synthetase subfamily. Homodimer. The tRNA molecule binds across the dimer.

It localises to the cytoplasm. It catalyses the reaction tRNA(Ser) + L-serine + ATP = L-seryl-tRNA(Ser) + AMP + diphosphate + H(+). The enzyme catalyses tRNA(Sec) + L-serine + ATP = L-seryl-tRNA(Sec) + AMP + diphosphate + H(+). Its pathway is aminoacyl-tRNA biosynthesis; selenocysteinyl-tRNA(Sec) biosynthesis; L-seryl-tRNA(Sec) from L-serine and tRNA(Sec): step 1/1. Catalyzes the attachment of serine to tRNA(Ser). Is also able to aminoacylate tRNA(Sec) with serine, to form the misacylated tRNA L-seryl-tRNA(Sec), which will be further converted into selenocysteinyl-tRNA(Sec). This is Serine--tRNA ligase from Orientia tsutsugamushi (strain Ikeda) (Rickettsia tsutsugamushi).